Reading from the N-terminus, the 537-residue chain is CTP synthase (537 aa).

An amidoligase domain region spans residues 1–265 (MVHFIFVTGG…DNKVLKFFNI (265 aa)). Position 13 (serine 13) interacts with CTP. Serine 13 serves as a coordination point for UTP. Residues 14–19 (SLGKGL) and aspartate 71 contribute to the ATP site. Residues aspartate 71 and glutamate 139 each contribute to the Mg(2+) site. Residues 146-148 (DIE) and lysine 222 each bind CTP. Residue lysine 222 coordinates UTP. The Glutamine amidotransferase type-1 domain occupies 290–536 (RIAIIAKYHK…IKAAIEYNKC (247 aa)). Glycine 352 is an L-glutamine binding site. Residue cysteine 379 is the Nucleophile; for glutamine hydrolysis of the active site. L-glutamine is bound by residues 380 to 383 (FGMQ), glutamate 403, and arginine 464. Residues histidine 509 and glutamate 511 contribute to the active site.

It belongs to the CTP synthase family. Homotetramer.

It carries out the reaction UTP + L-glutamine + ATP + H2O = CTP + L-glutamate + ADP + phosphate + 2 H(+). The catalysed reaction is L-glutamine + H2O = L-glutamate + NH4(+). The enzyme catalyses UTP + NH4(+) + ATP = CTP + ADP + phosphate + 2 H(+). It functions in the pathway pyrimidine metabolism; CTP biosynthesis via de novo pathway; CTP from UDP: step 2/2. Its activity is regulated as follows. Allosterically activated by GTP, when glutamine is the substrate; GTP has no effect on the reaction when ammonia is the substrate. The allosteric effector GTP functions by stabilizing the protein conformation that binds the tetrahedral intermediate(s) formed during glutamine hydrolysis. Inhibited by the product CTP, via allosteric rather than competitive inhibition. Its function is as follows. Catalyzes the ATP-dependent amination of UTP to CTP with either L-glutamine or ammonia as the source of nitrogen. Regulates intracellular CTP levels through interactions with the four ribonucleotide triphosphates. This is CTP synthase from Rickettsia rickettsii (strain Iowa).